The chain runs to 442 residues: Chromosomal replication initiator protein DnaA (442 aa).

The interval 1–75 (MDAWPRCLER…GNGEVALAVG (75 aa)) is domain I, interacts with DnaA modulators. Positions 75-104 (GSRPRAPEPAPAAAAVPSAPQAAPMVPFAG) are domain II. The segment at 105 to 322 (NLDSHYTFAN…GALNTLVARA (218 aa)) is domain III, AAA+ region. Positions 150, 152, 153, and 154 each coordinate ATP. The tract at residues 323–442 (NFTGRSITVE…WEKLIRKLSE (120 aa)) is domain IV, binds dsDNA.

The protein belongs to the DnaA family. Oligomerizes as a right-handed, spiral filament on DNA at oriC.

It is found in the cytoplasm. Functionally, plays an essential role in the initiation and regulation of chromosomal replication. ATP-DnaA binds to the origin of replication (oriC) to initiate formation of the DNA replication initiation complex once per cell cycle. Binds the DnaA box (a 9 base pair repeat at the origin) and separates the double-stranded (ds)DNA. Forms a right-handed helical filament on oriC DNA; dsDNA binds to the exterior of the filament while single-stranded (ss)DNA is stabiized in the filament's interior. The ATP-DnaA-oriC complex binds and stabilizes one strand of the AT-rich DNA unwinding element (DUE), permitting loading of DNA polymerase. After initiation quickly degrades to an ADP-DnaA complex that is not apt for DNA replication. Binds acidic phospholipids. This chain is Chromosomal replication initiator protein DnaA, found in Xanthomonas euvesicatoria pv. vesicatoria (strain 85-10) (Xanthomonas campestris pv. vesicatoria).